The following is a 357-amino-acid chain: Hemolysin VllY (357 aa).

2 consecutive VOC domains span residues 12-132 (GFEF…FVDR) and 162-313 (EIDH…IFTQ). Fe cation is bound by residues His165, His243, and Glu322.

This sequence belongs to the 4HPPD family. The cofactor is Fe cation.

This is Hemolysin VllY (vllY) from Vibrio vulnificus (strain CMCP6).